The chain runs to 283 residues: MLKTVLITGCSHGGLGAAMAKIYHAKGFQVFATVRNKAKVGSLGGIDGIEIMELEVTSVESIRQCANTVAKRTGGTLDILVNNAGVNAIVPLLDASLDDAKKVYDANVWSVVAMAQAFAPMLIKAKGTMCNISSVSGEMVFAWAGVYSSSRSAGTRISETLRLELAPLGVRVVTVILGGVQTSGNDPSNIADLELPSSSYYQKITAVIDLHKKTMVHPNKQNVDVAAENVVNDLLNGRGIFIRRGQASTLSWLFNTFLPYRLFTYLINRESALDKIGFRGDTE.

Positions 1–20 are cleaved as a signal peptide; it reads MLKTVLITGCSHGGLGAAMA. Ile7, Thr33, Lys39, Glu55, and Asn83 together coordinate NADP(+). N-linked (GlcNAc...) asparagine glycosylation is present at Asn131. The active-site Proton donor is the Ser133. NADP(+)-binding residues include Tyr147, Arg151, Val180, and Thr182. The active-site Proton acceptor is Tyr147.

This sequence belongs to the short-chain dehydrogenases/reductases (SDR) family.

Functionally, short-chain dehydrogenase; part of the gene cluster that mediates the biosynthesis of the mycotoxin cyclochlorotine, a hepatotoxic and carcinogenic cyclic chlorinated pentapeptide. The function of cctT within the pathway, if any, remains undetermined. The NRPS cctN initially catalyzes the condensation of L-serine (Ser), Pro, L-2-aminobutyrate (2Abu), Ser, and beta-Phe in this order to produce isocyclotine. After the dichlorination of Pro2 catalyzed by cctP2 to produce isocyclochlorotine, the cctO-mediated transacylation of isocyclochlorotine can furnish cyclochlorotine. The subsequent hydroxylation of cyclochlorotine by cctR yields hydroxycyclochlorotine as the final product. CctP1 probably acts as a phenylalanine aminomutase and provides the uncommon building block beta-Phe. Furthermore, 2Abu can be synthesized from threonine by one of the threonine dehydratases and transaminases localized outside of the cluster. The functions of the remaining proteins encoded by the cluster, cctM and cctT, have not been identified yet. The chain is Short-chain dehydrogenase cctT from Talaromyces islandicus (Penicillium islandicum).